The sequence spans 276 residues: Malectin-A (276 aa).

The signal sequence occupies residues 1–26 (MLSIRTVLGPLATILLTVLGPFGAHG). Residues 27 to 253 (SGLADKVIWA…TPNPYASDNS (227 aa)) are Lumenal-facing. Residues tyrosine 67, tyrosine 89, tyrosine 116, phenylalanine 117, and aspartate 186 each coordinate a carbohydrate. Residues 204 to 247 (PMLQPHPGLEKKEEEEEEEEEEGSTSKKQINKNRVQSGPRTPNP) are disordered. A compositionally biased stretch (acidic residues) spans 216 to 226 (EEEEEEEEEEG). The segment covering 229–247 (SKKQINKNRVQSGPRTPNP) has biased composition (polar residues). N-linked (GlcNAc...) asparagine glycosylation occurs at asparagine 252. A helical membrane pass occupies residues 254–274 (SLMFPILVAFGVFIPTLFCLC). Over 275–276 (RL) the chain is Cytoplasmic.

Belongs to the malectin family. As to expression, widely expressed throughout development including the anterior neuroectoderm and neural crest at stages 18 and 20, and the retina, hatching gland, otic vesicle, epibranchial placodes, pronephros and tail tip of later states. At stage 41, expressed in the liver, pancreas, branchial arches and proctodeum. Expressed broadly in adults in fat, intestine, gall bladder, eye, muscle, kidney, stomach, liver, heart, pancreas and lung.

It localises to the endoplasmic reticulum membrane. Functionally, carbohydrate-binding protein with a strong ligand preference for Glc2-N-glycan. May play a role in the early steps of protein N-glycosylation. Can bind di- or higher oligomers but not monomers of glucose, including maltose, maltotriose, maltotetraose, maltoheptaose, nigerose, kojibose, cellobiose and isomaltose, although based on their subcellular locations, these are unlikely to all be physiological ligands. The sequence is that of Malectin-A from Xenopus laevis (African clawed frog).